The chain runs to 293 residues: Acetyl-coenzyme A carboxylase carboxyl transferase subunit beta (293 aa).

The 265-residue stretch at 29–293 (LWVKCSECSQ…GVKELAEANT (265 aa)) folds into the CoA carboxyltransferase N-terminal domain. The Zn(2+) site is built by Cys-33, Cys-36, Cys-52, and Cys-55. A C4-type zinc finger spans residues 33 to 55 (CSECSQVAYRKDLISNFNVCSNC).

This sequence belongs to the AccD/PCCB family. In terms of assembly, acetyl-CoA carboxylase is a heterohexamer composed of biotin carboxyl carrier protein (AccB), biotin carboxylase (AccC) and two subunits each of ACCase subunit alpha (AccA) and ACCase subunit beta (AccD). Requires Zn(2+) as cofactor.

It localises to the cytoplasm. It carries out the reaction N(6)-carboxybiotinyl-L-lysyl-[protein] + acetyl-CoA = N(6)-biotinyl-L-lysyl-[protein] + malonyl-CoA. The protein operates within lipid metabolism; malonyl-CoA biosynthesis; malonyl-CoA from acetyl-CoA: step 1/1. Its function is as follows. Component of the acetyl coenzyme A carboxylase (ACC) complex. Biotin carboxylase (BC) catalyzes the carboxylation of biotin on its carrier protein (BCCP) and then the CO(2) group is transferred by the transcarboxylase to acetyl-CoA to form malonyl-CoA. The chain is Acetyl-coenzyme A carboxylase carboxyl transferase subunit beta from Prochlorococcus marinus (strain MIT 9301).